Consider the following 125-residue polypeptide: Protein ApaG (125 aa).

An ApaG domain is found at 3–125 (TAVTEGIEVT…FPLVVPGSLN (123 aa)).

In Anaeromyxobacter dehalogenans (strain 2CP-1 / ATCC BAA-258), this protein is Protein ApaG.